Here is a 146-residue protein sequence, read N- to C-terminus: NADH-quinone oxidoreductase subunit A (146 aa).

3 helical membrane passes run 14 to 34 (FALF…GGFL), 68 to 88 (LVAM…AWAV), and 96 to 116 (IGFI…IYLV).

It belongs to the complex I subunit 3 family. In terms of assembly, NDH-1 is composed of 13 different subunits. Subunits NuoA, H, J, K, L, M, N constitute the membrane sector of the complex.

The protein resides in the cell inner membrane. The enzyme catalyses a quinone + NADH + 5 H(+)(in) = a quinol + NAD(+) + 4 H(+)(out). In terms of biological role, NDH-1 shuttles electrons from NADH, via FMN and iron-sulfur (Fe-S) centers, to quinones in the respiratory chain. The immediate electron acceptor for the enzyme in this species is believed to be ubiquinone. Couples the redox reaction to proton translocation (for every two electrons transferred, four hydrogen ions are translocated across the cytoplasmic membrane), and thus conserves the redox energy in a proton gradient. This chain is NADH-quinone oxidoreductase subunit A, found in Pectobacterium atrosepticum (strain SCRI 1043 / ATCC BAA-672) (Erwinia carotovora subsp. atroseptica).